Consider the following 476-residue polypeptide: Fatty acid hydroperoxide lyase, chloroplastic (476 aa).

Residues 280–300 (LLFILGFNAFGGFSIFLPTLL) form a helical membrane-spanning segment. Cys438 is a binding site for heme.

The protein belongs to the cytochrome P450 family. Requires heme as cofactor. In terms of tissue distribution, highly expressed in developing flowers and in young leaves. Detected in stems and immature green fruits, but not in mature green and red fruits.

It is found in the plastid. Its subcellular location is the chloroplast outer membrane. Reversibly inhibited by nordihydroguaiaretic acid (NDGA) and irreversibly by salicylic acid. Cytochrome P450 of the CYP74B subfamily involved in the biosynthesis of traumatin and C6 aldehydes. Metabolizes 13- but not 9-hydroperoxides of linoleic and linolenic acids. Can use 15S-hydroperoxy-11(Z),13(E),17(Z)-eicosatrienoic acid (15-HPET) and 13S-hydroperoxy-9(Z),11(E),15(Z)-octadecatrienoic acid (13-HPOT) as substrates, but only 5% activity with 13S-hydroperoxy-9(Z),11(E)-octadecadienoic acid (13-HPOD). Produces n-hexanal and 12-oxo-9(Z)-dodecanoic acid from 13-HPOD. The polypeptide is Fatty acid hydroperoxide lyase, chloroplastic (Solanum lycopersicum (Tomato)).